The following is a 301-amino-acid chain: HTH-type transcriptional regulator MtrA (301 aa).

The HTH araC/xylS-type domain occupies Lys-196–Glu-297. 2 DNA-binding regions (H-T-H motif) span residues Asp-216–Val-237 and Val-264–Tyr-287.

The affinity for the mtrCDE promoter increases 2-fold in the presence of TX-100, a known effector and substrate of the MtrCDE pump. Involved in the induction of the mtrCDE-encoded efflux pump. Binds specifically to the mtrCDE promoter region. Required for high-level inducible resistance to the detergent Triton X-100 (TX-100) and the spermicide nonoxynol-9 (N-9). This Neisseria gonorrhoeae protein is HTH-type transcriptional regulator MtrA.